The primary structure comprises 204 residues: Methylthioribulose-1-phosphate dehydratase (204 aa).

Zn(2+)-binding residues include H94 and H96.

It belongs to the aldolase class II family. MtnB subfamily. Zn(2+) serves as cofactor.

It carries out the reaction 5-(methylsulfanyl)-D-ribulose 1-phosphate = 5-methylsulfanyl-2,3-dioxopentyl phosphate + H2O. The protein operates within amino-acid biosynthesis; L-methionine biosynthesis via salvage pathway; L-methionine from S-methyl-5-thio-alpha-D-ribose 1-phosphate: step 2/6. Its function is as follows. Catalyzes the dehydration of methylthioribulose-1-phosphate (MTRu-1-P) into 2,3-diketo-5-methylthiopentyl-1-phosphate (DK-MTP-1-P). The chain is Methylthioribulose-1-phosphate dehydratase from Citrobacter koseri (strain ATCC BAA-895 / CDC 4225-83 / SGSC4696).